We begin with the raw amino-acid sequence, 293 residues long: Ribosomal protein L11 methyltransferase (293 aa).

Residues Thr145, Gly166, Asp188, and Asn230 each contribute to the S-adenosyl-L-methionine site.

The protein belongs to the methyltransferase superfamily. PrmA family.

Its subcellular location is the cytoplasm. The enzyme catalyses L-lysyl-[protein] + 3 S-adenosyl-L-methionine = N(6),N(6),N(6)-trimethyl-L-lysyl-[protein] + 3 S-adenosyl-L-homocysteine + 3 H(+). Its function is as follows. Methylates ribosomal protein L11. This chain is Ribosomal protein L11 methyltransferase, found in Shewanella denitrificans (strain OS217 / ATCC BAA-1090 / DSM 15013).